Reading from the N-terminus, the 228-residue chain is Type II methyltransferase M.HhaII (228 aa).

Belongs to the N(4)/N(6)-methyltransferase family.

It carries out the reaction a 2'-deoxyadenosine in DNA + S-adenosyl-L-methionine = an N(6)-methyl-2'-deoxyadenosine in DNA + S-adenosyl-L-homocysteine + H(+). A beta subtype methylase, recognizes the double-stranded sequence 5'-GANTC-3', methylates A-2 on both strands, and protects the DNA from cleavage by the HhaII endonuclease. This Haemophilus parahaemolyticus protein is Type II methyltransferase M.HhaII.